Here is a 148-residue protein sequence, read N- to C-terminus: Glutamyl-tRNA(Gln) amidotransferase subunit C, mitochondrial (148 aa).

This sequence belongs to the GatC family. As to quaternary structure, subunit of the heterotrimeric GatCAB amidotransferase (AdT) complex, composed of A, B and C subunits.

It is found in the mitochondrion. The enzyme catalyses L-glutamyl-tRNA(Gln) + L-glutamine + ATP + H2O = L-glutaminyl-tRNA(Gln) + L-glutamate + ADP + phosphate + H(+). Functionally, allows the formation of correctly charged Gln-tRNA(Gln) through the transamidation of misacylated Glu-tRNA(Gln) in the mitochondria. The reaction takes place in the presence of glutamine and ATP through an activated gamma-phospho-Glu-tRNA(Gln). The protein is Glutamyl-tRNA(Gln) amidotransferase subunit C, mitochondrial of Drosophila sechellia (Fruit fly).